The chain runs to 259 residues: Cytochrome c oxidase subunit 3 (259 aa).

Helical transmembrane passes span 13–33 (PWPL…TSWF), 36–56 (HGFI…FQWW), 80–100 (GMVL…WAYF), 125–145 (FQIP…VTWA), 154–174 (HAEA…FTLL), 195–215 (FFVA…FLLI), and 237–257 (AWYW…IYWW).

The protein belongs to the cytochrome c oxidase subunit 3 family. In terms of assembly, component of the cytochrome c oxidase (complex IV, CIV), a multisubunit enzyme composed of a catalytic core of 3 subunits and several supernumerary subunits. The complex exists as a monomer or a dimer and forms supercomplexes (SCs) in the inner mitochondrial membrane with ubiquinol-cytochrome c oxidoreductase (cytochrome b-c1 complex, complex III, CIII).

The protein localises to the mitochondrion inner membrane. It carries out the reaction 4 Fe(II)-[cytochrome c] + O2 + 8 H(+)(in) = 4 Fe(III)-[cytochrome c] + 2 H2O + 4 H(+)(out). Functionally, component of the cytochrome c oxidase, the last enzyme in the mitochondrial electron transport chain which drives oxidative phosphorylation. The respiratory chain contains 3 multisubunit complexes succinate dehydrogenase (complex II, CII), ubiquinol-cytochrome c oxidoreductase (cytochrome b-c1 complex, complex III, CIII) and cytochrome c oxidase (complex IV, CIV), that cooperate to transfer electrons derived from NADH and succinate to molecular oxygen, creating an electrochemical gradient over the inner membrane that drives transmembrane transport and the ATP synthase. Cytochrome c oxidase is the component of the respiratory chain that catalyzes the reduction of oxygen to water. Electrons originating from reduced cytochrome c in the intermembrane space (IMS) are transferred via the dinuclear copper A center (CU(A)) of subunit 2 and heme A of subunit 1 to the active site in subunit 1, a binuclear center (BNC) formed by heme A3 and copper B (CU(B)). The BNC reduces molecular oxygen to 2 water molecules using 4 electrons from cytochrome c in the IMS and 4 protons from the mitochondrial matrix. This chain is Cytochrome c oxidase subunit 3 (COIII), found in Heterololigo bleekeri (Spear squid).